Reading from the N-terminus, the 370-residue chain is 4-hydroxy-3-methylbut-2-en-1-yl diphosphate synthase (flavodoxin) (370 aa).

C268, C271, C303, and E310 together coordinate [4Fe-4S] cluster.

Belongs to the IspG family. It depends on [4Fe-4S] cluster as a cofactor.

It catalyses the reaction (2E)-4-hydroxy-3-methylbut-2-enyl diphosphate + oxidized [flavodoxin] + H2O + 2 H(+) = 2-C-methyl-D-erythritol 2,4-cyclic diphosphate + reduced [flavodoxin]. Its pathway is isoprenoid biosynthesis; isopentenyl diphosphate biosynthesis via DXP pathway; isopentenyl diphosphate from 1-deoxy-D-xylulose 5-phosphate: step 5/6. Its function is as follows. Converts 2C-methyl-D-erythritol 2,4-cyclodiphosphate (ME-2,4cPP) into 1-hydroxy-2-methyl-2-(E)-butenyl 4-diphosphate. The polypeptide is 4-hydroxy-3-methylbut-2-en-1-yl diphosphate synthase (flavodoxin) (Bacillus anthracis (strain A0248)).